Here is a 472-residue protein sequence, read N- to C-terminus: Divalent metal cation transporter MntH (472 aa).

A run of 11 helical transmembrane segments spans residues 59 to 79 (LLAF…PGNW), 92 to 112 (MLLS…ALAA), 136 to 156 (LALW…EVIG), 167 to 187 (VPII…LLLM), 196 to 216 (AFVI…IVLA), 233 to 253 (VVAD…TVMP), 288 to 308 (LALM…AAVF), 325 to 345 (LLAP…ALLA), 377 to 397 (VLTR…YGEQ), 402 to 422 (LLLL…IPLL), and 439 to 459 (WLMV…VKLL).

It belongs to the NRAMP family.

Its subcellular location is the cell inner membrane. In terms of biological role, h(+)-stimulated, divalent metal cation uptake system. This is Divalent metal cation transporter MntH from Xylella fastidiosa (strain 9a5c).